The chain runs to 566 residues: Type 3 secretion system secretin (566 aa).

An N-terminal signal peptide occupies residues 1-22 (MKKFNIKSLTLLIVLLPLIVNA).

This sequence belongs to the bacterial secretin family. T3SS SctC subfamily. As to quaternary structure, the core secretion machinery of the T3SS is composed of approximately 20 different proteins, including cytoplasmic components, a base, an export apparatus and a needle. This subunit is part of the base, which anchors the injectisome in the bacterial cell envelope. Forms a stable homooligomeric complex.

The protein resides in the cell outer membrane. In terms of biological role, component of the type III secretion system (T3SS), also called injectisome, which is used to inject bacterial effector proteins into eukaryotic host cells. Forms a ring-shaped multimeric structure with an apparent central pore in the outer membrane. The polypeptide is Type 3 secretion system secretin (Shigella sonnei).